Consider the following 158-residue polypeptide: Ribonuclease H (158 aa).

One can recognise an RNase H type-1 domain in the interval 3-144 (ELKLIHIFTD…CDQLARAAAE (142 aa)). The Mg(2+) site is built by D12, E50, D72, and D136. Residues 137 to 158 (QLARAAAEASPTQVDEGYQPES) are disordered.

This sequence belongs to the RNase H family. As to quaternary structure, monomer. The cofactor is Mg(2+).

It localises to the cytoplasm. It carries out the reaction Endonucleolytic cleavage to 5'-phosphomonoester.. Functionally, endonuclease that specifically degrades the RNA of RNA-DNA hybrids. This chain is Ribonuclease H, found in Shewanella sp. (strain ANA-3).